A 251-amino-acid polypeptide reads, in one-letter code: Imidazole glycerol phosphate synthase subunit HisF (251 aa).

Residues aspartate 11 and aspartate 130 contribute to the active site.

This sequence belongs to the HisA/HisF family. As to quaternary structure, heterodimer of HisH and HisF.

The protein resides in the cytoplasm. It carries out the reaction 5-[(5-phospho-1-deoxy-D-ribulos-1-ylimino)methylamino]-1-(5-phospho-beta-D-ribosyl)imidazole-4-carboxamide + L-glutamine = D-erythro-1-(imidazol-4-yl)glycerol 3-phosphate + 5-amino-1-(5-phospho-beta-D-ribosyl)imidazole-4-carboxamide + L-glutamate + H(+). It functions in the pathway amino-acid biosynthesis; L-histidine biosynthesis; L-histidine from 5-phospho-alpha-D-ribose 1-diphosphate: step 5/9. IGPS catalyzes the conversion of PRFAR and glutamine to IGP, AICAR and glutamate. The HisF subunit catalyzes the cyclization activity that produces IGP and AICAR from PRFAR using the ammonia provided by the HisH subunit. This Chlorobium phaeobacteroides (strain DSM 266 / SMG 266 / 2430) protein is Imidazole glycerol phosphate synthase subunit HisF.